The primary structure comprises 197 residues: ATP-dependent Clp protease proteolytic subunit (197 aa).

Residue S102 is the Nucleophile of the active site. Residue H127 is part of the active site.

The protein belongs to the peptidase S14 family. As to quaternary structure, fourteen ClpP subunits assemble into 2 heptameric rings which stack back to back to give a disk-like structure with a central cavity, resembling the structure of eukaryotic proteasomes.

The protein resides in the cytoplasm. It catalyses the reaction Hydrolysis of proteins to small peptides in the presence of ATP and magnesium. alpha-casein is the usual test substrate. In the absence of ATP, only oligopeptides shorter than five residues are hydrolyzed (such as succinyl-Leu-Tyr-|-NHMec, and Leu-Tyr-Leu-|-Tyr-Trp, in which cleavage of the -Tyr-|-Leu- and -Tyr-|-Trp bonds also occurs).. Its function is as follows. Cleaves peptides in various proteins in a process that requires ATP hydrolysis. Has a chymotrypsin-like activity. Plays a major role in the degradation of misfolded proteins. The protein is ATP-dependent Clp protease proteolytic subunit of Borreliella afzelii (strain PKo) (Borrelia afzelii).